The chain runs to 81 residues: Neuronatin (81 aa).

Belongs to the neuronatin family.

In terms of biological role, may participate in the maintenance of segment identity in the hindbrain and pituitary development, and maturation or maintenance of the overall structure of the nervous system. May function as a regulatory subunit of ion channels. The protein is Neuronatin (NNAT) of Mesocricetus auratus (Golden hamster).